Reading from the N-terminus, the 287-residue chain is Melatonin receptor type 1B-A (287 aa).

Residues 1–28 lie on the Extracellular side of the membrane; that stretch reads MPENVSLIRNRTEVGQGRAWGSGAGARP. Asn-4 and Asn-10 each carry an N-linked (GlcNAc...) asparagine glycan. The helical transmembrane segment at 29-49 threads the bilayer; it reads AWVVMVLAGVLIFTSVVDVLG. Residues 50–69 are Cytoplasmic-facing; sequence NVLVIISVLRNRKLRNAGNA. The chain crosses the membrane as a helical span at residues 70–90; sequence FVVSLAFADLLVVCYPYPLVL. Topologically, residues 91 to 107 are extracellular; sequence HAMLHAGWLPGEMECKV. Residues Cys-105 and Cys-182 are joined by a disulfide bond. A helical transmembrane segment spans residues 108-128; the sequence is SGFLMGASVIGSIFNITAIAI. Residues 129 to 149 lie on the Cytoplasmic side of the membrane; that stretch reads NRYCFICQANTYEKIYGRAGT. The helical transmembrane segment at 150 to 170 threads the bilayer; the sequence is LVLLTLVWVLTAIAILPNLSL. At 171 to 192 the chain is on the extracellular side; it reads GSLTYDPRVYSCTFSQTTSAGY. A helical membrane pass occupies residues 193–213; the sequence is TIAVVTVHFLLPIAVVTFCYL. Residues 214–245 are Cytoplasmic-facing; the sequence is RIWVLVLRVRRRVTTDVRPRLRPSELRHFLTM. A helical transmembrane segment spans residues 246–266; the sequence is FVVFVLFAVCWAPLNLIGLAV. Residues 267–275 are Extracellular-facing; it reads AVDPPRVGP. The chain crosses the membrane as a helical span at residues 276–287; the sequence is LVPDWLFVMSYF.

Belongs to the G-protein coupled receptor 1 family.

The protein localises to the cell membrane. High affinity receptor for melatonin. The activity of this receptor is mediated by pertussis toxin sensitive G proteins that inhibits adenylate cyclase activity. The sequence is that of Melatonin receptor type 1B-A (mtnr1ba) from Danio rerio (Zebrafish).